A 339-amino-acid polypeptide reads, in one-letter code: Cathepsin L-like peptidase (339 aa).

The first 16 residues, 1–16, serve as a signal peptide directing secretion; that stretch reads MKILILLVAFVAAANA. Residues 17-121 constitute a propeptide, activation peptide; that stretch reads VSLYELVKEE…VTFIEPANVE (105 aa). N95 carries an N-linked (GlcNAc...) asparagine glycan. Intrachain disulfides connect C143–C186, C177–C219, and C278–C328. C146 is an active-site residue. Catalysis depends on residues H285 and N306.

It belongs to the peptidase C1 family. In terms of assembly, dimer of a heavy and a light chain linked by disulfide bonds. Interacts with cystatin; the interaction results in inhibition of cathepsin L-like peptidase activity. In terms of tissue distribution, salivary gland. Midgut.

The catalysed reaction is Specificity close to that of papain. As compared to cathepsin B, cathepsin L exhibits higher activity toward protein substrates, but has little activity on Z-Arg-Arg-NHMec, and no peptidyl-dipeptidase activity.. With respect to regulation, more active in the presence of a reducing agent DTT. In terms of biological role, proteinase exhibiting preference for Leu, Val and Phe residues at the P2 position. The chain is Cathepsin L-like peptidase from Aedes aegypti (Yellowfever mosquito).